A 260-amino-acid chain; its full sequence is Thiazole synthase (260 aa).

Residue K102 is the Schiff-base intermediate with DXP of the active site. Residues G163, 189–190, and 211–212 contribute to the 1-deoxy-D-xylulose 5-phosphate site; these read AG and NT.

Belongs to the ThiG family. As to quaternary structure, homotetramer. Forms heterodimers with either ThiH or ThiS.

It localises to the cytoplasm. The enzyme catalyses [ThiS sulfur-carrier protein]-C-terminal-Gly-aminoethanethioate + 2-iminoacetate + 1-deoxy-D-xylulose 5-phosphate = [ThiS sulfur-carrier protein]-C-terminal Gly-Gly + 2-[(2R,5Z)-2-carboxy-4-methylthiazol-5(2H)-ylidene]ethyl phosphate + 2 H2O + H(+). The protein operates within cofactor biosynthesis; thiamine diphosphate biosynthesis. Catalyzes the rearrangement of 1-deoxy-D-xylulose 5-phosphate (DXP) to produce the thiazole phosphate moiety of thiamine. Sulfur is provided by the thiocarboxylate moiety of the carrier protein ThiS. In vitro, sulfur can be provided by H(2)S. This is Thiazole synthase from Geobacter sp. (strain M21).